A 345-amino-acid polypeptide reads, in one-letter code: D-alanine--D-alanine ligase (345 aa).

Positions 137 to 342 (KAAFSAAGLP…LEELVHQLLE (206 aa)) constitute an ATP-grasp domain. 169 to 224 (ETQLGYPCFIKPANLGSSVGISKATNRSELQAGLDLAASHDSRLLVEKGLQVRELE) is an ATP binding site. Mg(2+) is bound by residues aspartate 295, glutamate 309, and asparagine 311.

It belongs to the D-alanine--D-alanine ligase family. The cofactor is Mg(2+). It depends on Mn(2+) as a cofactor.

Its subcellular location is the cytoplasm. The catalysed reaction is 2 D-alanine + ATP = D-alanyl-D-alanine + ADP + phosphate + H(+). Its pathway is cell wall biogenesis; peptidoglycan biosynthesis. Its function is as follows. Cell wall formation. In Synechococcus sp. (strain RCC307), this protein is D-alanine--D-alanine ligase.